Consider the following 375-residue polypeptide: 23S rRNA (uracil(747)-C(5))-methyltransferase RlmC (375 aa).

Positions 3, 11, 14, and 87 each coordinate [4Fe-4S] cluster. S-adenosyl-L-methionine is bound by residues Gln212, Phe241, Glu262, and Asn307. Cys334 functions as the Nucleophile in the catalytic mechanism.

Belongs to the class I-like SAM-binding methyltransferase superfamily. RNA M5U methyltransferase family. RlmC subfamily.

It catalyses the reaction uridine(747) in 23S rRNA + S-adenosyl-L-methionine = 5-methyluridine(747) in 23S rRNA + S-adenosyl-L-homocysteine + H(+). In terms of biological role, catalyzes the formation of 5-methyl-uridine at position 747 (m5U747) in 23S rRNA. This is 23S rRNA (uracil(747)-C(5))-methyltransferase RlmC from Xenorhabdus nematophila (strain ATCC 19061 / DSM 3370 / CCUG 14189 / LMG 1036 / NCIMB 9965 / AN6).